The sequence spans 380 residues: DNA replication and repair protein RecF (380 aa).

ATP is bound at residue 30 to 37 (GQNGQGKT).

The protein belongs to the RecF family.

The protein localises to the cytoplasm. Functionally, the RecF protein is involved in DNA metabolism; it is required for DNA replication and normal SOS inducibility. RecF binds preferentially to single-stranded, linear DNA. It also seems to bind ATP. The chain is DNA replication and repair protein RecF from Myxococcus xanthus (strain DK1622).